We begin with the raw amino-acid sequence, 136 residues long: uncharacterized protein (136 aa).

This is an uncharacterized protein from Gallus gallus (Chicken).